Here is a 469-residue protein sequence, read N- to C-terminus: GTPase Der (469 aa).

EngA-type G domains follow at residues 30–193 and 203–376; these read PVLA…PEVA and RRVA…ASWD. Residues 36-43, 83-87, 145-148, 209-216, 256-260, and 321-324 each bind GTP; these read GRPNVGKS, DTGGW, NKVD, GKPNVGKS, DTAGL, and NKWD. The 83-residue stretch at 377-459 folds into the KH-like domain; it reads TRIPTGPLNS…PIRINVRVRE (83 aa).

The protein belongs to the TRAFAC class TrmE-Era-EngA-EngB-Septin-like GTPase superfamily. EngA (Der) GTPase family. As to quaternary structure, associates with the 50S ribosomal subunit.

Its function is as follows. GTPase that plays an essential role in the late steps of ribosome biogenesis. This chain is GTPase Der, found in Mycobacterium ulcerans (strain Agy99).